The primary structure comprises 323 residues: Lipoyl synthase (323 aa).

C69, C74, C80, C95, C99, C102, and S310 together coordinate [4Fe-4S] cluster. Residues 81-299 (WTHGTLTVMI…EAWGYELGFR (219 aa)) form the Radical SAM core domain.

It belongs to the radical SAM superfamily. Lipoyl synthase family. It depends on [4Fe-4S] cluster as a cofactor.

The protein localises to the cytoplasm. It catalyses the reaction [[Fe-S] cluster scaffold protein carrying a second [4Fe-4S](2+) cluster] + N(6)-octanoyl-L-lysyl-[protein] + 2 oxidized [2Fe-2S]-[ferredoxin] + 2 S-adenosyl-L-methionine + 4 H(+) = [[Fe-S] cluster scaffold protein] + N(6)-[(R)-dihydrolipoyl]-L-lysyl-[protein] + 4 Fe(3+) + 2 hydrogen sulfide + 2 5'-deoxyadenosine + 2 L-methionine + 2 reduced [2Fe-2S]-[ferredoxin]. The protein operates within protein modification; protein lipoylation via endogenous pathway; protein N(6)-(lipoyl)lysine from octanoyl-[acyl-carrier-protein]: step 2/2. Functionally, catalyzes the radical-mediated insertion of two sulfur atoms into the C-6 and C-8 positions of the octanoyl moiety bound to the lipoyl domains of lipoate-dependent enzymes, thereby converting the octanoylated domains into lipoylated derivatives. This chain is Lipoyl synthase, found in Thermus thermophilus (strain ATCC 27634 / DSM 579 / HB8).